Here is a 311-residue protein sequence, read N- to C-terminus: Olfactory receptor 10G9 (311 aa).

Residues 1–23 (MSKTSLVTAFILTGLPHAPGLDA) lie on the Extracellular side of the membrane. A helical membrane pass occupies residues 24 to 44 (PLFGIFLVVYVLTVLGNLLIL). Topologically, residues 45–52 (LVIRVDSH) are cytoplasmic. A helical membrane pass occupies residues 53 to 73 (LHTPMYYFLTNLSFIDMWFST). Residues 74–98 (VTVPKMLMTLVSPSGRAISFHSCVA) lie on the Extracellular side of the membrane. Cys96 and Cys188 are disulfide-bonded. A helical membrane pass occupies residues 99-119 (QLYFFHFLGSTECFLYTVMSY). The Cytoplasmic segment spans residues 120-138 (DRYLAISYPLRYTSMMSGS). A helical transmembrane segment spans residues 139-159 (RCALLATSTWLSGSLHSAVQT). At 160-196 (ILTFHLPYCGPNQIQHYLCDAPPILKLACADTSANEM) the chain is on the extracellular side. Residues 197 to 216 (VIFVDIGLVASGCFLLIVLS) form a helical membrane-spanning segment. Residues 217–236 (YVSIVCSILRIHTSEGRHRA) lie on the Cytoplasmic side of the membrane. Residues 237–257 (FQTCASHCIVVLCFFVPCVFI) form a helical membrane-spanning segment. Topologically, residues 258–268 (YLRPGSRDVVD) are extracellular. Residues 269 to 289 (GVVAIFYTVLTPLLNPVVYTL) traverse the membrane as a helical segment. The Cytoplasmic segment spans residues 290–311 (RNKEVKKAVLKLRDKVAHSQGE).

The protein belongs to the G-protein coupled receptor 1 family.

The protein localises to the cell membrane. In terms of biological role, odorant receptor. The sequence is that of Olfactory receptor 10G9 (OR10G9) from Homo sapiens (Human).